The primary structure comprises 307 residues: Mycothiol acetyltransferase (307 aa).

N-acetyltransferase domains follow at residues 12–157 (TRTD…PPLP) and 160–307 (VTLR…YQLG). Glu-43 is a binding site for 1D-myo-inositol 2-(L-cysteinylamino)-2-deoxy-alpha-D-glucopyranoside. 87 to 89 (LAV) serves as a coordination point for acetyl-CoA. 1D-myo-inositol 2-(L-cysteinylamino)-2-deoxy-alpha-D-glucopyranoside is bound by residues Glu-187, Lys-227, and Glu-239. Acetyl-CoA is bound by residues 243 to 245 (LGV) and 250 to 256 (HGGGLGK). Tyr-278 provides a ligand contact to 1D-myo-inositol 2-(L-cysteinylamino)-2-deoxy-alpha-D-glucopyranoside.

Belongs to the acetyltransferase family. MshD subfamily. As to quaternary structure, monomer.

It carries out the reaction 1D-myo-inositol 2-(L-cysteinylamino)-2-deoxy-alpha-D-glucopyranoside + acetyl-CoA = mycothiol + CoA + H(+). In terms of biological role, catalyzes the transfer of acetyl from acetyl-CoA to desacetylmycothiol (Cys-GlcN-Ins) to form mycothiol. The protein is Mycothiol acetyltransferase of Salinispora tropica (strain ATCC BAA-916 / DSM 44818 / JCM 13857 / NBRC 105044 / CNB-440).